Reading from the N-terminus, the 449-residue chain is Adenylosuccinate lyase (449 aa).

Residues 9–10, 75–77, and 102–103 contribute to the N(6)-(1,2-dicarboxyethyl)-AMP site; these read RY, KHD, and TS. His-150 serves as the catalytic Proton donor/acceptor. N(6)-(1,2-dicarboxyethyl)-AMP is bound at residue Gln-224. Ser-275 (proton donor/acceptor) is an active-site residue. Residues Ser-276, 281-283, and 320-324 each bind N(6)-(1,2-dicarboxyethyl)-AMP; these read KMN and SSERI.

It belongs to the lyase 1 family. Adenylosuccinate lyase subfamily. In terms of assembly, homotetramer. Residues from neighboring subunits contribute catalytic and substrate-binding residues to each active site.

It catalyses the reaction N(6)-(1,2-dicarboxyethyl)-AMP = fumarate + AMP. It carries out the reaction (2S)-2-[5-amino-1-(5-phospho-beta-D-ribosyl)imidazole-4-carboxamido]succinate = 5-amino-1-(5-phospho-beta-D-ribosyl)imidazole-4-carboxamide + fumarate. The protein operates within purine metabolism; AMP biosynthesis via de novo pathway; AMP from IMP: step 2/2. It participates in purine metabolism; IMP biosynthesis via de novo pathway; 5-amino-1-(5-phospho-D-ribosyl)imidazole-4-carboxamide from 5-amino-1-(5-phospho-D-ribosyl)imidazole-4-carboxylate: step 2/2. In terms of biological role, catalyzes two reactions in de novo purine nucleotide biosynthesis. Catalyzes the breakdown of 5-aminoimidazole- (N-succinylocarboxamide) ribotide (SAICAR or 2-[5-amino-1-(5-phospho-beta-D-ribosyl)imidazole-4-carboxamido]succinate) to 5-aminoimidazole-4-carboxamide ribotide (AICAR or 5-amino-1-(5-phospho-beta-D-ribosyl)imidazole-4-carboxamide) and fumarate, and of adenylosuccinate (ADS or N(6)-(1,2-dicarboxyethyl)-AMP) to adenosine monophosphate (AMP) and fumarate. The sequence is that of Adenylosuccinate lyase (purB) from Methanothermobacter thermautotrophicus (strain ATCC 29096 / DSM 1053 / JCM 10044 / NBRC 100330 / Delta H) (Methanobacterium thermoautotrophicum).